The chain runs to 497 residues: UDP-N-acetylmuramoyl-L-alanyl-D-glutamate--2,6-diaminopimelate ligase (497 aa).

Ser-29 contacts UDP-N-acetyl-alpha-D-muramoyl-L-alanyl-D-glutamate. 116 to 122 (GTNGKTT) is an ATP binding site. Residues Asn-157, 158 to 159 (TT), Ser-185, Gln-191, and Arg-193 each bind UDP-N-acetyl-alpha-D-muramoyl-L-alanyl-D-glutamate. Lys-225 carries the N6-carboxylysine modification. Meso-2,6-diaminopimelate contacts are provided by residues Arg-392, 416–419 (DNPR), Gly-467, and Glu-471. Residues 416 to 419 (DNPR) carry the Meso-diaminopimelate recognition motif motif.

It belongs to the MurCDEF family. MurE subfamily. Mg(2+) is required as a cofactor. Post-translationally, carboxylation is probably crucial for Mg(2+) binding and, consequently, for the gamma-phosphate positioning of ATP.

The protein resides in the cytoplasm. It catalyses the reaction UDP-N-acetyl-alpha-D-muramoyl-L-alanyl-D-glutamate + meso-2,6-diaminopimelate + ATP = UDP-N-acetyl-alpha-D-muramoyl-L-alanyl-gamma-D-glutamyl-meso-2,6-diaminopimelate + ADP + phosphate + H(+). Its pathway is cell wall biogenesis; peptidoglycan biosynthesis. Functionally, catalyzes the addition of meso-diaminopimelic acid to the nucleotide precursor UDP-N-acetylmuramoyl-L-alanyl-D-glutamate (UMAG) in the biosynthesis of bacterial cell-wall peptidoglycan. In Buchnera aphidicola subsp. Acyrthosiphon pisum (strain APS) (Acyrthosiphon pisum symbiotic bacterium), this protein is UDP-N-acetylmuramoyl-L-alanyl-D-glutamate--2,6-diaminopimelate ligase.